The primary structure comprises 306 residues: UPF0282 protein Pars_1056 (306 aa).

Belongs to the UPF0282 family.

This Pyrobaculum arsenaticum (strain DSM 13514 / JCM 11321 / PZ6) protein is UPF0282 protein Pars_1056.